We begin with the raw amino-acid sequence, 251 residues long: MNLISIPAFQDNYIWLLANRQKHCVIVDPGESAPVLATLAQGQYVPQAILLTHHHNDHVGGVADLRHHFPDIPVYGPQETAKKGATVIVNDGDSLTIAGQNYTIIAVPGHTLGHIAYYSSPYLFCGDTLFSAGCGRLLEGTPEQMYASIQRLAQLPDETLICCAHEYTLSNLKFAHAILPADQDIATYQQQIEQLRSKNLPSLPVKLQFERKINVFLRCNDIDLQRKIGITSPPDSLVSVFCELRSRKDSF.

7 residues coordinate Zn(2+): His53, His55, Asp57, His58, His110, Asp127, and His165.

It belongs to the metallo-beta-lactamase superfamily. Glyoxalase II family. Monomer. The cofactor is Zn(2+).

It carries out the reaction an S-(2-hydroxyacyl)glutathione + H2O = a 2-hydroxy carboxylate + glutathione + H(+). Its pathway is secondary metabolite metabolism; methylglyoxal degradation; (R)-lactate from methylglyoxal: step 2/2. Its function is as follows. Thiolesterase that catalyzes the hydrolysis of S-D-lactoyl-glutathione to form glutathione and D-lactic acid. This chain is Hydroxyacylglutathione hydrolase, found in Yersinia pseudotuberculosis serotype IB (strain PB1/+).